Consider the following 232-residue polypeptide: tRNA1(Val) (adenine(37)-N6)-methyltransferase (232 aa).

The protein belongs to the methyltransferase superfamily. tRNA (adenine-N(6)-)-methyltransferase family.

The protein resides in the cytoplasm. It carries out the reaction adenosine(37) in tRNA1(Val) + S-adenosyl-L-methionine = N(6)-methyladenosine(37) in tRNA1(Val) + S-adenosyl-L-homocysteine + H(+). In terms of biological role, specifically methylates the adenine in position 37 of tRNA(1)(Val) (anticodon cmo5UAC). This chain is tRNA1(Val) (adenine(37)-N6)-methyltransferase, found in Haemophilus influenzae (strain PittGG).